Here is a 515-residue protein sequence, read N- to C-terminus: Maturase K (515 aa).

It belongs to the intron maturase 2 family. MatK subfamily.

It is found in the plastid. The protein localises to the chloroplast. In terms of biological role, usually encoded in the trnK tRNA gene intron. Probably assists in splicing its own and other chloroplast group II introns. The polypeptide is Maturase K (Larix laricina (Tamarack)).